Reading from the N-terminus, the 237-residue chain is Ribonuclease PH (237 aa).

Residues arginine 86 and 124–126 (GTR) contribute to the phosphate site.

It belongs to the RNase PH family. As to quaternary structure, homohexameric ring arranged as a trimer of dimers.

It catalyses the reaction tRNA(n+1) + phosphate = tRNA(n) + a ribonucleoside 5'-diphosphate. Phosphorolytic 3'-5' exoribonuclease that plays an important role in tRNA 3'-end maturation. Removes nucleotide residues following the 3'-CCA terminus of tRNAs; can also add nucleotides to the ends of RNA molecules by using nucleoside diphosphates as substrates, but this may not be physiologically important. Probably plays a role in initiation of 16S rRNA degradation (leading to ribosome degradation) during starvation. In Cereibacter sphaeroides (strain ATCC 17025 / ATH 2.4.3) (Rhodobacter sphaeroides), this protein is Ribonuclease PH.